The primary structure comprises 229 residues: Large ribosomal subunit protein uL1 (229 aa).

The protein belongs to the universal ribosomal protein uL1 family. Part of the 50S ribosomal subunit.

In terms of biological role, binds directly to 23S rRNA. The L1 stalk is quite mobile in the ribosome, and is involved in E site tRNA release. Protein L1 is also a translational repressor protein, it controls the translation of the L11 operon by binding to its mRNA. This is Large ribosomal subunit protein uL1 from Streptococcus suis (strain 98HAH33).